The following is a 128-amino-acid chain: uncharacterized protein (128 aa).

The segment at 1–50 (MSNEQGKGMGFFGNKGKPASEKKDEKKTKLDLDYKPDLNPSTPYDPTLPV) is disordered. The span at 18–36 (PASEKKDEKKTKLDLDYKP) shows a compositional bias: basic and acidic residues.

This is an uncharacterized protein from Bacillus anthracis.